The following is an 838-amino-acid chain: Adenylate cyclase (838 aa).

The interval methionine 1–valine 541 is catalytic. Positions glutamate 547–serine 838 are regulatory.

Belongs to the adenylyl cyclase class-1 family.

Its subcellular location is the cytoplasm. It carries out the reaction ATP = 3',5'-cyclic AMP + diphosphate. The sequence is that of Adenylate cyclase (cya) from Pasteurella multocida (strain Pm70).